A 435-amino-acid chain; its full sequence is Nuclear receptor subfamily 6 group A member 1 (435 aa).

Residues 11-86 (QRACLICGDR…MGMNRKAIRE (76 aa)) constitute a DNA-binding region (nuclear receptor). 2 consecutive NR C4-type zinc fingers follow at residues 14–34 (CLIC…CEGC) and 50–69 (CSRD…CQYC). The interval 84–158 (IREDGMPGGR…STPSSSRSME (75 aa)) is disordered. Polar residues predominate over residues 121–141 (NTSWSNNGDSDHSSPGNAVSE). Low complexity predominate over residues 142 to 156 (SNQPSPVSTPSSSRS). In terms of domain architecture, NR LBD spans 204–435 (QSHTLINQLL…HSCKTIVTKE (232 aa)).

The protein belongs to the nuclear hormone receptor family. NR6 subfamily. Homodimer. In terms of tissue distribution, transiently expressed in differentiating cells of all embryonic germ layers. Expressed in an anterior to posterior concentration gradient from late gastrula to midneurula stages. Shows a complicated spatio-temporal pattern of expression during neurulation, being predominant in the neural plate and neural crest in midneurula embryos. At late tailbud (stage 30), mainly expressed in the head mesenchyme, gill arches and tail tip. Expression persists in the epidermis, somites and endoderm, and in the central nervous system, expression is restricted to the midbrain, hindbrain and part of the spinal cord. Isoforms Oo and Em are both expressed in the brain and isoform Oo is expressed in the germ cells of both the adult testis and ovary.

Its subcellular location is the cytoplasm. It localises to the nucleus. Functionally, probable orphan nuclear receptor. Binds to a response element containing repeats of the motif 5'-AGGTCA-3'. Required for anterior-posterior patterning during organogenesis. Acts with chordin to play a role in patterning the midbrain-hindbrain. Isoform Em is required for integrin-mediated cell matrix interaction during neurulation and for the morphogenetic movements leading to formation of the neural tube. Also mediates the effect of retinoic acid on primary neurogenesis. The sequence is that of Nuclear receptor subfamily 6 group A member 1 from Xenopus laevis (African clawed frog).